The primary structure comprises 558 residues: Arginine--tRNA ligase (558 aa).

The 'HIGH' region motif lies at 129–139 (ANPTGPLHVGH).

It belongs to the class-I aminoacyl-tRNA synthetase family. Monomer.

It is found in the cytoplasm. It carries out the reaction tRNA(Arg) + L-arginine + ATP = L-arginyl-tRNA(Arg) + AMP + diphosphate. The protein is Arginine--tRNA ligase of Polaromonas naphthalenivorans (strain CJ2).